The chain runs to 358 residues: Methionine aminopeptidase 2 (358 aa).

Histidine 109 contacts substrate. Residues aspartate 130, aspartate 141, and histidine 210 each coordinate a divalent metal cation. Histidine 218 lines the substrate pocket. A divalent metal cation contacts are provided by glutamate 243 and glutamate 339.

The protein belongs to the peptidase M24A family. Methionine aminopeptidase eukaryotic type 2 subfamily. Requires Co(2+) as cofactor. Zn(2+) serves as cofactor. The cofactor is Mn(2+). It depends on Fe(2+) as a cofactor.

The protein localises to the cytoplasm. It catalyses the reaction Release of N-terminal amino acids, preferentially methionine, from peptides and arylamides.. Its function is as follows. Cotranslationally removes the N-terminal methionine from nascent proteins. The N-terminal methionine is often cleaved when the second residue in the primary sequence is small and uncharged (Met-Ala-, Cys, Gly, Pro, Ser, Thr, or Val). The polypeptide is Methionine aminopeptidase 2 (Encephalitozoon cuniculi (strain GB-M1) (Microsporidian parasite)).